Reading from the N-terminus, the 149-residue chain is Large ribosomal subunit protein uL13 (149 aa).

This sequence belongs to the universal ribosomal protein uL13 family. In terms of assembly, part of the 50S ribosomal subunit.

Functionally, this protein is one of the early assembly proteins of the 50S ribosomal subunit, although it is not seen to bind rRNA by itself. It is important during the early stages of 50S assembly. This chain is Large ribosomal subunit protein uL13, found in Chlorobium phaeovibrioides (strain DSM 265 / 1930) (Prosthecochloris vibrioformis (strain DSM 265)).